The chain runs to 313 residues: B3 domain-containing protein At2g31720 (313 aa).

The tract at residues Lys80 to Ser110 is disordered. Polar residues predominate over residues Pro84 to His99. The TF-B3 DNA-binding region spans Trp169–Asp267.

Its subcellular location is the nucleus. The polypeptide is B3 domain-containing protein At2g31720 (ARF70) (Arabidopsis thaliana (Mouse-ear cress)).